The primary structure comprises 151 residues: Centrin-A (151 aa).

EF-hand domains are found at residues 80 to 115 (DVYA…LGEA) and 116 to 151 (RSDS…KKIY). Residues aspartate 93, aspartate 95, serine 97, tyrosine 99, aspartate 104, aspartate 129, asparagine 131, aspartate 133, lysine 135, and glutamate 140 each contribute to the Ca(2+) site.

The protein belongs to the centrin family.

It is found in the cytoplasm. The protein localises to the cytoskeleton. The protein resides in the microtubule organizing center. It localises to the centrosome. Its subcellular location is the nucleus. Functionally, plays a fundamental role in microtubule-organizing center structure and function. This chain is Centrin-A (cenA), found in Dictyostelium discoideum (Social amoeba).